A 515-amino-acid chain; its full sequence is Maturase K (515 aa).

This sequence belongs to the intron maturase 2 family. MatK subfamily.

It localises to the plastid. The protein localises to the chloroplast. Functionally, usually encoded in the trnK tRNA gene intron. Probably assists in splicing its own and other chloroplast group II introns. The polypeptide is Maturase K (Pinus pumila (Dwarf Siberian pine)).